Consider the following 164-residue polypeptide: NADH-quinone oxidoreductase subunit I 2 (164 aa).

2 4Fe-4S ferredoxin-type domains span residues 39–71 (IVLT…VVKA) and 81–110 (ESFR…LTPD). Positions 51, 54, 57, 61, 90, 93, 96, and 100 each coordinate [4Fe-4S] cluster.

The protein belongs to the complex I 23 kDa subunit family. As to quaternary structure, NDH-1 is composed of 14 different subunits. Subunits NuoA, H, J, K, L, M, N constitute the membrane sector of the complex. [4Fe-4S] cluster serves as cofactor.

The protein localises to the cell inner membrane. It carries out the reaction a quinone + NADH + 5 H(+)(in) = a quinol + NAD(+) + 4 H(+)(out). Its function is as follows. NDH-1 shuttles electrons from NADH, via FMN and iron-sulfur (Fe-S) centers, to quinones in the respiratory chain. The immediate electron acceptor for the enzyme in this species is believed to be ubiquinone. Couples the redox reaction to proton translocation (for every two electrons transferred, four hydrogen ions are translocated across the cytoplasmic membrane), and thus conserves the redox energy in a proton gradient. The protein is NADH-quinone oxidoreductase subunit I 2 of Cereibacter sphaeroides (strain ATCC 17023 / DSM 158 / JCM 6121 / CCUG 31486 / LMG 2827 / NBRC 12203 / NCIMB 8253 / ATH 2.4.1.) (Rhodobacter sphaeroides).